Here is a 128-residue protein sequence, read N- to C-terminus: Sulfurtransferase TusD (128 aa).

Cys78 serves as the catalytic Cysteine persulfide intermediate.

It belongs to the DsrE/TusD family. In terms of assembly, heterohexamer, formed by a dimer of trimers. The hexameric TusBCD complex contains 2 copies each of TusB, TusC and TusD. The TusBCD complex interacts with TusE.

The protein localises to the cytoplasm. In terms of biological role, part of a sulfur-relay system required for 2-thiolation of 5-methylaminomethyl-2-thiouridine (mnm(5)s(2)U) at tRNA wobble positions. Accepts sulfur from TusA and transfers it in turn to TusE. The chain is Sulfurtransferase TusD from Cronobacter sakazakii (strain ATCC BAA-894) (Enterobacter sakazakii).